Reading from the N-terminus, the 273-residue chain is MGQKLSGSLKSVEVREPALRPAKRELRGLEPGRPARLDQLLDMPAAGLAVQLRHAWNPEDRSLNVFVKDDDRLTFHRHPVAQSTDGIRGKVGHARGLHAWQIHWPARQRGTHAVVGVATARAPLHSVGYTALVGSDSESWGWDLGRSRLYHDGKNRPGVAYPAFLGPDEAFALPDSLLVVLDMDEGTLSFIVDGQYLGVAFRGLKGKKLYPVVSAVWGHCEVTMRYINGLDPEPLPLMDLCRRSIRSALGRQRLRDIGSLPLPQSLKNYLQYQ.

The region spanning 34–233 (PARLDQLLDM…MRYINGLDPE (200 aa)) is the B30.2/SPRY domain. The 40-residue stretch at 234–273 (PLPLMDLCRRSIRSALGRQRLRDIGSLPLPQSLKNYLQYQ) folds into the SOCS box domain.

Belongs to the SPSB family. Component of the probable ECS(SPSB4) E3 ubiquitin-protein ligase complex which contains CUL5, RNF7/RBX2, Elongin BC complex and SPSB4. Interacts with CUL5; RNF7; ELOB and ELOC. Interacts with MET. Interacts (via B30.2/SPRY domain) with PAWR; this interaction occurs in association with the Elongin BC complex. Interacts with NOS2. Interacts with EPHB2.

The protein resides in the cytoplasm. It is found in the cytosol. It participates in protein modification; protein ubiquitination. Substrate recognition component of a SCF-like ECS (Elongin BC-CUL2/5-SOCS-box protein) E3 ubiquitin-protein ligase complex which mediates the ubiquitination and subsequent proteasomal degradation of target proteins. Negatively regulates nitric oxide (NO) production and limits cellular toxicity in activated macrophages by mediating the ubiquitination and proteasomal degradation of NOS2. Acts as a bridge which links NOS2 with the ECS E3 ubiquitin ligase complex components ELOC and CUL5. Diminishes EphB2-dependent cell repulsive responses by mediating the ubiquitination and degradation of the EphB2/CTF2. Regulates cellular clock function by mediating ubiquitination and proteasomal degradation of the circadian transcriptional repressor NR1D1. The protein is SPRY domain-containing SOCS box protein 4 (Spsb4) of Mus musculus (Mouse).